The sequence spans 537 residues: Protoporphyrinogen oxidase 1, chloroplastic (537 aa).

The transit peptide at methionine 1 to cysteine 34 directs the protein to the chloroplast. The residue at position 35 (serine 35) is an N-acetylserine. FAD-binding positions include glycine 63–glycine 68, glutamate 90–alanine 91, and glycine 112–serine 115. A compositionally biased stretch (basic and acidic residues) spans arginine 256–leucine 268. The tract at residues arginine 256–threonine 275 is disordered. Residue valine 511–leucine 513 participates in FAD binding.

This sequence belongs to the protoporphyrinogen/coproporphyrinogen oxidase family. Protoporphyrinogen oxidase subfamily. Requires FAD as cofactor. Expressed at high levels in the leaves and at low levels in the roots and floral buds.

The protein localises to the plastid. It localises to the chloroplast. It catalyses the reaction protoporphyrinogen IX + 3 O2 = protoporphyrin IX + 3 H2O2. It participates in porphyrin-containing compound metabolism; protoporphyrin-IX biosynthesis; protoporphyrin-IX from protoporphyrinogen-IX: step 1/1. Its pathway is porphyrin-containing compound metabolism; chlorophyll biosynthesis. Inhibited by acifluorfen. Catalyzes the 6-electron oxidation of protoporphyrinogen-IX to form protoporphyrin-IX. This is Protoporphyrinogen oxidase 1, chloroplastic (PPOX1) from Arabidopsis thaliana (Mouse-ear cress).